The sequence spans 263 residues: Taurine import ATP-binding protein TauB (263 aa).

In terms of domain architecture, ABC transporter spans 4–235 (LTAEAISLSF…RYAAGETVRS (232 aa)). An ATP-binding site is contributed by 40 to 47 (GPSGCGKS).

It belongs to the ABC transporter superfamily. Taurine importer (TC 3.A.1.17.1) family. The complex is composed of two ATP-binding proteins (TauB), two transmembrane proteins (TauC) and a solute-binding protein (TauA).

It localises to the cell inner membrane. The catalysed reaction is taurine(out) + ATP + H2O = taurine(in) + ADP + phosphate + H(+). Its function is as follows. Part of the ABC transporter complex TauABC involved in taurine import. Responsible for energy coupling to the transport system. The sequence is that of Taurine import ATP-binding protein TauB from Pseudomonas aeruginosa (strain ATCC 15692 / DSM 22644 / CIP 104116 / JCM 14847 / LMG 12228 / 1C / PRS 101 / PAO1).